The chain runs to 135 residues: Crustacean hyperglycemic hormones A* (135 aa).

An N-terminal signal peptide occupies residues methionine 1–glycine 26. Glutamine 62 bears the Pyrrolidone carboxylic acid mark. Intrachain disulfides connect cysteine 68-cysteine 104, cysteine 84-cysteine 100, and cysteine 87-cysteine 113. Valine 133 carries the post-translational modification Valine amide.

This sequence belongs to the arthropod CHH/MIH/GIH/VIH hormone family. In terms of tissue distribution, produced by the medulla terminalis X-organ in the eyestalks and transported to the sinus gland where they are stored and released.

The protein resides in the secreted. Hormone found in the sinus gland of isopods and decapods which controls the blood sugar level. Has a secretagogue action over the amylase released from the midgut gland. May act as a stress hormone and may be involved in the control of molting and reproduction. This is Crustacean hyperglycemic hormones A* (CHHA*) from Faxonius limosus (Spinycheek crayfish).